The sequence spans 347 residues: NADH-ubiquinone oxidoreductase chain 2 (347 aa).

11 consecutive transmembrane segments (helical) span residues 3 to 23 (PIIL…VMIS), 25 to 45 (HWLL…PIMM), 67 to 87 (SMLL…WTVM), 96 to 116 (MLMT…FWVP), 122 to 142 (IPLS…MSVL), 145 to 165 (ILPS…ITIG), 178 to 198 (IMAY…LYNP), 200 to 220 (MTLL…TLFM), 237 to 257 (APIM…LPPL), 274 to 294 (DSII…YFYM), and 325 to 345 (LLPT…ILSI).

This sequence belongs to the complex I subunit 2 family. In terms of assembly, core subunit of respiratory chain NADH dehydrogenase (Complex I) which is composed of 45 different subunits. Interacts with TMEM242.

It is found in the mitochondrion inner membrane. It carries out the reaction a ubiquinone + NADH + 5 H(+)(in) = a ubiquinol + NAD(+) + 4 H(+)(out). Functionally, core subunit of the mitochondrial membrane respiratory chain NADH dehydrogenase (Complex I) which catalyzes electron transfer from NADH through the respiratory chain, using ubiquinone as an electron acceptor. Essential for the catalytic activity and assembly of complex I. In Ovis aries (Sheep), this protein is NADH-ubiquinone oxidoreductase chain 2.